The following is a 637-amino-acid chain: SCF-associated factor 1 (637 aa).

Residues 14-63 enclose the F-box domain; that stretch reads GLSPDIVQATLPFLSSDDIKNLSQTNKYYNTLLDFDHSKILWHELFHKAF. At S16 the chain carries Phosphoserine. An RCC1 1 repeat occupies 109 to 202; that stretch reads AKFYSWGYLK…GFSFQILTES (94 aa). The segment at 242-315 is disordered; sequence YPRITSRSNG…RTTMPSMGPH (74 aa). Residues 244-260 show a composition bias toward polar residues; it reads RITSRSNGSTVNTTGTF. S266 bears the Phosphoserine mark. Low complexity predominate over residues 289-305; the sequence is SGGAPAASPGGSHSGVP. One copy of the RCC1 2 repeat lies at 565-635; sequence GHLYSWGIES…GWQTGALIIK (71 aa).

Interacts with AAH1, SKP1 and CDC53. Component of the SCF(SAF1) complex containing CDC53, SKP1, HRT1 and SAF1.

The protein operates within protein modification; protein ubiquitination. In terms of biological role, substrate recognition component of a SCF (SKP1-CUL1-F-box protein) E3 ubiquitin-protein ligase complex which mediates the ubiquitination and subsequent proteasomal degradation of target proteins. Targets AAH1 adenine deaminase for proteasome-dependent degradation upon entry into quiescence. Targets also URA7. The polypeptide is SCF-associated factor 1 (SAF1) (Saccharomyces cerevisiae (strain ATCC 204508 / S288c) (Baker's yeast)).